Here is a 319-residue protein sequence, read N- to C-terminus: NADH-ubiquinone oxidoreductase chain 1 (319 aa).

Transmembrane regions (helical) follow at residues 5–25 (TINS…LTLM), 72–92 (LLIS…TPIP), 102–122 (LGLL…LWAG), 146–166 (VTLG…TMQL), 173–193 (FTWL…STLA), 225–245 (FFLT…ILFI), 254–274 (ELFL…FLWI), and 295–315 (LPLT…TSGI).

The protein belongs to the complex I subunit 1 family.

The protein resides in the mitochondrion inner membrane. It catalyses the reaction a ubiquinone + NADH + 5 H(+)(in) = a ubiquinol + NAD(+) + 4 H(+)(out). Core subunit of the mitochondrial membrane respiratory chain NADH dehydrogenase (Complex I) that is believed to belong to the minimal assembly required for catalysis. Complex I functions in the transfer of electrons from NADH to the respiratory chain. The immediate electron acceptor for the enzyme is believed to be ubiquinone. The polypeptide is NADH-ubiquinone oxidoreductase chain 1 (MT-ND1) (Varanus flavescens (Yellow monitor)).